Reading from the N-terminus, the 127-residue chain is RutC family protein PYRAB12510 (127 aa).

It belongs to the RutC family.

This chain is RutC family protein PYRAB12510, found in Pyrococcus abyssi (strain GE5 / Orsay).